The following is a 333-amino-acid chain: Endo-1,4-beta-xylanase (333 aa).

Residues 1 to 17 (MYLVAFMLLAILPTGYC) form the signal peptide. In terms of domain architecture, GH10 spans 18 to 330 (QLNTLAVRAG…KPAYQGIVDG (313 aa)). The active-site Proton donor is glutamate 147. Catalysis depends on glutamate 252, which acts as the Nucleophile.

This sequence belongs to the glycosyl hydrolase 10 (cellulase F) family.

The protein localises to the secreted. It carries out the reaction Endohydrolysis of (1-&gt;4)-beta-D-xylosidic linkages in xylans.. It participates in glycan degradation; xylan degradation. Functionally, has xylanase activity. Seems to be involved in the release of sugars from the hemicellulolytic fraction in the compost. This Agaricus bisporus (White button mushroom) protein is Endo-1,4-beta-xylanase (xlnA).